A 391-amino-acid polypeptide reads, in one-letter code: DNA-directed RNA polymerase subunit Rpo1C (391 aa).

The protein belongs to the RNA polymerase beta' chain family. As to quaternary structure, part of the RNA polymerase complex.

It localises to the cytoplasm. Its subcellular location is the chromosome. The catalysed reaction is RNA(n) + a ribonucleoside 5'-triphosphate = RNA(n+1) + diphosphate. Functionally, DNA-dependent RNA polymerase (RNAP) catalyzes the transcription of DNA into RNA using the four ribonucleoside triphosphates as substrates. Forms part of the jaw domain. The sequence is that of DNA-directed RNA polymerase subunit Rpo1C from Thermococcus kodakarensis (strain ATCC BAA-918 / JCM 12380 / KOD1) (Pyrococcus kodakaraensis (strain KOD1)).